Here is a 189-residue protein sequence, read N- to C-terminus: Accessory gene regulator protein B (189 aa).

A run of 5 helical transmembrane segments spans residues 49-69 (IAYILNIFLFTLITNLTFYLI), 81-100 (SFWCYVESIILFILLPLVIV), 110-130 (IILTVISLGVISVYAPAATKK), 143-163 (YYAIIVSLTLFIITLIIKEPF), and 164-184 (AQFIQLGIIIEAITLLPIFFI).

This sequence belongs to the AgrB family.

It localises to the cell membrane. Essential for the production of a quorum sensing system signal molecule, the autoinducing peptide (AIP). This quorum sensing system is responsible for the regulation of the expression of virulence factor genes. Involved in the proteolytic processing of AgrD, the precursor of AIP. This chain is Accessory gene regulator protein B, found in Staphylococcus aureus (strain COL).